The sequence spans 581 residues: Pyridine nucleotide-disulfide oxidoreductase domain-containing protein 2 (581 aa).

An FAD-binding site is contributed by 38-71 (VVIGAGHNGLVAAAYLQRLGVNTAVFERRHVIGG).

It belongs to the carotenoid/retinoid oxidoreductase family. In terms of assembly, interacts with COX5B; this interaction may contribute to localize PYROXD2 to the inner face of the inner mitochondrial membrane.

The protein localises to the mitochondrion matrix. Functionally, probable oxidoreductase that may play a role as regulator of mitochondrial function. In Mus musculus (Mouse), this protein is Pyridine nucleotide-disulfide oxidoreductase domain-containing protein 2.